The sequence spans 336 residues: Retinol dehydrogenase 14 (336 aa).

Threonine 5 carries the post-translational modification Phosphothreonine. 50–56 (GANSGLG) provides a ligand contact to NADP(+). Serine 192 contributes to the substrate binding site. The active-site Proton acceptor is the tyrosine 217.

This sequence belongs to the short-chain dehydrogenases/reductases (SDR) family. Widely expressed.

It carries out the reaction all-trans-retinol + NADP(+) = all-trans-retinal + NADPH + H(+). The catalysed reaction is 9-cis-retinol + NADP(+) = 9-cis-retinal + NADPH + H(+). It catalyses the reaction 11-cis-retinol + NADP(+) = 11-cis-retinal + NADPH + H(+). The protein operates within cofactor metabolism; retinol metabolism. Retinol dehydrogenase with a clear preference for NADP. Displays high activity towards 9-cis, 11-cis and all-trans-retinol. Shows a very weak activity towards 13-cis-retinol. Has no activity towards steroid. The chain is Retinol dehydrogenase 14 (RDH14) from Homo sapiens (Human).